A 290-amino-acid polypeptide reads, in one-letter code: Protein male abnormal 3 (290 aa).

DNA-binding regions (DM) lie at residues 28-74 and 94-142; these read CQRC…SKKK and CARC…KLRR. Disordered stretches follow at residues 139-167 and 179-202; these read KLRR…MDME and IIGT…LSMS. A compositionally biased stretch (basic and acidic residues) spans 146 to 155; sequence KSRDGKEPKR. A compositionally biased stretch (low complexity) spans 182-202; sequence TSASPSPSSTTDTMSPSLSMS.

Expression is undetectable in hermaphrodites, but persists in males. In males, expressed in cells of the tail tip.

It is found in the nucleus. Transcription factor which binds the DNA motif 5'-[CGA][TCA][TA]ACAATGT[AT][TGA]C-3', probably as a monomer. Acts partially redundantly with the transcription factor dmd-3 to coordinate tail tip cell fusion and retraction and thereby regulate male tail tip morphogenesis. Promotes male-specific development of two tissues, the peripheral nervous system and the intestine. In the peripheral nervous system, directs differentiation of sensory ray neuroblasts into peripheral sense organs. In the intestine, causes repression of vitellogenin gene transcription. This chain is Protein male abnormal 3, found in Caenorhabditis elegans.